Here is a 421-residue protein sequence, read N- to C-terminus: ATP-dependent RNA helicase RhlB (421 aa).

Positions 9–37 (QKFSDFSLHPKVVEALEKKGFHNCTPIQA) match the Q motif motif. The Helicase ATP-binding domain maps to 40–219 (LPLTLAGRDV…FEQMNNAEYI (180 aa)). 53 to 60 (AQTGTGKT) lines the ATP pocket. Residues 165 to 168 (DEAD) carry the DEAD box motif. The Helicase C-terminal domain occupies 245 to 390 (RLLQTLIEEE…VSKYNPDALM (146 aa)). A disordered region spans residues 392-421 (DLPKPLRLTRPRTGNGPRRTGAPRNRRRSG). The segment covering 402–414 (PRTGNGPRRTGAP) has biased composition (low complexity).

Belongs to the DEAD box helicase family. RhlB subfamily. As to quaternary structure, component of the RNA degradosome, which is a multiprotein complex involved in RNA processing and mRNA degradation.

The protein resides in the cytoplasm. The catalysed reaction is ATP + H2O = ADP + phosphate + H(+). DEAD-box RNA helicase involved in RNA degradation. Has RNA-dependent ATPase activity and unwinds double-stranded RNA. The protein is ATP-dependent RNA helicase RhlB of Shigella dysenteriae serotype 1 (strain Sd197).